Here is a 275-residue protein sequence, read N- to C-terminus: Ribosomal protein L11 methyltransferase (275 aa).

Residues Thr-130, Gly-151, Asp-172, and Asn-213 each contribute to the S-adenosyl-L-methionine site.

The protein belongs to the methyltransferase superfamily. PrmA family.

The protein resides in the cytoplasm. It carries out the reaction L-lysyl-[protein] + 3 S-adenosyl-L-methionine = N(6),N(6),N(6)-trimethyl-L-lysyl-[protein] + 3 S-adenosyl-L-homocysteine + 3 H(+). Its function is as follows. Methylates ribosomal protein L11. This Wolinella succinogenes (strain ATCC 29543 / DSM 1740 / CCUG 13145 / JCM 31913 / LMG 7466 / NCTC 11488 / FDC 602W) (Vibrio succinogenes) protein is Ribosomal protein L11 methyltransferase.